The following is a 319-amino-acid chain: Putative G-protein coupled receptor B0244.7 (319 aa).

Residue Asn-28 is glycosylated (N-linked (GlcNAc...) asparagine). 6 consecutive transmembrane segments (helical) span residues 49 to 69 (AIFI…IYIF), 107 to 127 (LPVI…FIIF), 131 to 151 (SFLS…IAVV), 166 to 186 (VLLI…CGIV), 206 to 226 (GPVL…CLVI), and 261 to 281 (LFAG…SAII).

Belongs to the G-protein coupled receptor 1 family. B0244 subfamily.

Its subcellular location is the cell membrane. The chain is Putative G-protein coupled receptor B0244.7 from Caenorhabditis elegans.